Here is a 142-residue protein sequence, read N- to C-terminus: Galectin-10 (142 aa).

Position 2 is an N-acetylserine (S2). The 133-residue stretch at 6-138 (VPYTEAASLS…DISLTKFNVS (133 aa)) folds into the Galectin domain.

In terms of assembly, interacts with CEL. Expressed abundantly in the bone marrow. Expressed exclusively by eosinophils and basophils. Not detected in monocytes and neutrophils. Expressed in CD25-positive regulatory T-cells (Treg) (at protein level). Found in intestinal tissue from patients with Celiac disease, expression is directly related to the histological grade of mucosal damage and to the number of eosinophils found in the duodenal lesion (at protein level). Found in sputum of patients with eosinophilic inflammatory diseases such as asthma (at protein level).

Its subcellular location is the cytoplasm. It is found in the cytosol. It localises to the cytoplasmic granule. Regulates immune responses through the recognition of cell-surface glycans. Essential for the anergy and suppressive function of CD25-positive regulatory T-cells (Treg). The chain is Galectin-10 (CLC) from Homo sapiens (Human).